Here is a 389-residue protein sequence, read N- to C-terminus: S-adenosylmethionine synthase (389 aa).

His15 contacts ATP. Mg(2+) is bound at residue Asp17. Position 43 (Glu43) interacts with K(+). L-methionine-binding residues include Glu56 and Gln99. The interval 99-109 (QSPDIAQGVNE) is flexible loop. Residues 166-168 (DAK), 234-235 (RF), Asp243, 249-250 (RK), Ala266, and Lys270 each bind ATP. Asp243 provides a ligand contact to L-methionine. Lys274 lines the L-methionine pocket.

It belongs to the AdoMet synthase family. In terms of assembly, homotetramer; dimer of dimers. Mg(2+) serves as cofactor. Requires K(+) as cofactor.

The protein localises to the cytoplasm. It catalyses the reaction L-methionine + ATP + H2O = S-adenosyl-L-methionine + phosphate + diphosphate. It functions in the pathway amino-acid biosynthesis; S-adenosyl-L-methionine biosynthesis; S-adenosyl-L-methionine from L-methionine: step 1/1. Its function is as follows. Catalyzes the formation of S-adenosylmethionine (AdoMet) from methionine and ATP. The overall synthetic reaction is composed of two sequential steps, AdoMet formation and the subsequent tripolyphosphate hydrolysis which occurs prior to release of AdoMet from the enzyme. This chain is S-adenosylmethionine synthase, found in Neisseria meningitidis serogroup C (strain 053442).